A 137-amino-acid chain; its full sequence is Protein yippee-like F37A8.5 (137 aa).

Positions 1–20 (MHFRMKVLENSSKHNTPKKQ) are disordered. Residues 32–129 (RCYSCIHCRA…IELAHMVKDN (98 aa)) form the Yippee domain. Zn(2+)-binding residues include cysteine 36, cysteine 39, cysteine 92, and cysteine 95.

It belongs to the yippee family.

The chain is Protein yippee-like F37A8.5 from Caenorhabditis elegans.